The following is a 51-amino-acid chain: Large ribosomal subunit protein bL33 (51 aa).

The tract at residues 1–21 (MRDKIKLESSAGTGHFYTTTK) is disordered. A compositionally biased stretch (polar residues) spans 10-20 (SAGTGHFYTTT).

This sequence belongs to the bacterial ribosomal protein bL33 family.

This is Large ribosomal subunit protein bL33 (rpmG) from Neisseria meningitidis serogroup A / serotype 4A (strain DSM 15465 / Z2491).